The following is a 513-amino-acid chain: GMP synthase [glutamine-hydrolyzing] (513 aa).

The Glutamine amidotransferase type-1 domain occupies 8–198; sequence KIIVLDYGSQ…ALNICGAKGN (191 aa). Cysteine 85 functions as the Nucleophile in the catalytic mechanism. Active-site residues include histidine 172 and glutamate 174. A GMPS ATP-PPase domain is found at 199–388; sequence WSMENFIDMQ…LGMPDEIVWR (190 aa). 226-232 is a binding site for ATP; it reads SGGVDSS.

As to quaternary structure, homodimer.

It carries out the reaction XMP + L-glutamine + ATP + H2O = GMP + L-glutamate + AMP + diphosphate + 2 H(+). Its pathway is purine metabolism; GMP biosynthesis; GMP from XMP (L-Gln route): step 1/1. In terms of biological role, catalyzes the synthesis of GMP from XMP. The protein is GMP synthase [glutamine-hydrolyzing] (guaA) of Lactococcus lactis subsp. lactis (strain IL1403) (Streptococcus lactis).